The chain runs to 127 residues: Small ribosomal subunit protein uS11 (127 aa).

Belongs to the universal ribosomal protein uS11 family. As to quaternary structure, part of the 30S ribosomal subunit. Interacts with proteins S7 and S18. Binds to IF-3.

Located on the platform of the 30S subunit, it bridges several disparate RNA helices of the 16S rRNA. Forms part of the Shine-Dalgarno cleft in the 70S ribosome. The polypeptide is Small ribosomal subunit protein uS11 (Chlorobaculum tepidum (strain ATCC 49652 / DSM 12025 / NBRC 103806 / TLS) (Chlorobium tepidum)).